A 290-amino-acid chain; its full sequence is Shikimate dehydrogenase (NADP(+)) (290 aa).

Shikimate is bound by residues 19 to 21 (SLS) and Ser65. Lys69 serves as the catalytic Proton acceptor. Shikimate is bound by residues Asn90 and Asp105. NADP(+) is bound by residues 129–133 (GAGGA) and Leu231. Tyr233 provides a ligand contact to shikimate. Gly254 is an NADP(+) binding site.

The protein belongs to the shikimate dehydrogenase family. In terms of assembly, homodimer.

The catalysed reaction is shikimate + NADP(+) = 3-dehydroshikimate + NADPH + H(+). The protein operates within metabolic intermediate biosynthesis; chorismate biosynthesis; chorismate from D-erythrose 4-phosphate and phosphoenolpyruvate: step 4/7. Involved in the biosynthesis of the chorismate, which leads to the biosynthesis of aromatic amino acids. Catalyzes the reversible NADPH linked reduction of 3-dehydroshikimate (DHSA) to yield shikimate (SA). This is Shikimate dehydrogenase (NADP(+)) from Latilactobacillus sakei subsp. sakei (strain 23K) (Lactobacillus sakei subsp. sakei).